Consider the following 1050-residue polypeptide: Calmodulin-binding transcription activator 2 (1050 aa).

Residues Ile15 to Ser141 constitute a DNA-binding region (CG-1). Polar residues-rich tracts occupy residues Ser141–Leu171 and Ser183–Pro196. 2 disordered regions span residues Ser141–Pro196 and Asn223–Val246. ANK repeat units lie at residues Asp661–Phe690 and Asn694–Ala723. IQ domains lie at Val870–Lys899 and Ile893–Leu922. The segment at Trp918 to Phe940 is calmodulin-binding. The stretch at Gln957–Met985 forms a coiled coil. A Phosphoserine modification is found at Ser984.

It belongs to the CAMTA family. As to expression, expressed in roots, stems, old leaves, petals, sepals, top of carpels, stigmas, stamen filaments, anthers and siliques, but not in pollen.

Its subcellular location is the nucleus. In terms of biological role, transcription activator that binds to the DNA consensus sequence 5'-[ACG]CGCG[GTC]-3'. Regulates transcriptional activity in response to calcium signals. Binds calmodulin in a calcium-dependent manner. Involved in freezing tolerance in association with CAMTA1 and CAMTA3. Contributes together with CAMTA1 and CAMTA3 to the positive regulation of the cold-induced expression of DREB1A/CBF3, DREB1B/CBF1 and DREB1C/CBF2. Involved together with CAMTA3 and CAMTA4 in the positive regulation of a general stress response. Involved in tolerance to aluminum. Binds to the promoter of ALMT1 transporter and contributes to the positive regulation of aluminum-induced expression of ALMT1. The chain is Calmodulin-binding transcription activator 2 from Arabidopsis thaliana (Mouse-ear cress).